The sequence spans 184 residues: GTP cyclohydrolase 1 (184 aa).

Residues C75, H78, and C146 each contribute to the Zn(2+) site.

This sequence belongs to the GTP cyclohydrolase I family. Homomer.

The enzyme catalyses GTP + H2O = 7,8-dihydroneopterin 3'-triphosphate + formate + H(+). The protein operates within cofactor biosynthesis; 7,8-dihydroneopterin triphosphate biosynthesis; 7,8-dihydroneopterin triphosphate from GTP: step 1/1. The sequence is that of GTP cyclohydrolase 1 from Streptococcus pneumoniae (strain Taiwan19F-14).